Reading from the N-terminus, the 599-residue chain is Sulfite reductase [NADPH] flavoprotein alpha-component (599 aa).

One can recognise a Flavodoxin-like domain in the interval 64 to 202 (ITIISASQTG…AASEWRARVV (139 aa)). Residues 70–75 (SQTGNA), 117–120 (STQG), and 153–162 (LGDSSYEFFC) each bind FMN. In terms of domain architecture, FAD-binding FR-type spans 234-448 (DAPLVASLSV…IEHNDNFRLP (215 aa)). FAD contacts are provided by residues Thr-322, Ala-356, 386–389 (RLYS), 404–406 (TVG), Tyr-410, and 419–422 (GGAS). Residues 519-520 (SR), 525-529 (KVYVQ), and Asp-561 each bind NADP(+). Tyr-599 is a binding site for FAD.

Belongs to the NADPH-dependent sulphite reductase flavoprotein subunit CysJ family. It in the N-terminal section; belongs to the flavodoxin family. The protein in the C-terminal section; belongs to the flavoprotein pyridine nucleotide cytochrome reductase family. In terms of assembly, alpha(8)-beta(8). The alpha component is a flavoprotein, the beta component is a hemoprotein. It depends on FAD as a cofactor. FMN is required as a cofactor.

It carries out the reaction hydrogen sulfide + 3 NADP(+) + 3 H2O = sulfite + 3 NADPH + 4 H(+). It participates in sulfur metabolism; hydrogen sulfide biosynthesis; hydrogen sulfide from sulfite (NADPH route): step 1/1. Functionally, component of the sulfite reductase complex that catalyzes the 6-electron reduction of sulfite to sulfide. This is one of several activities required for the biosynthesis of L-cysteine from sulfate. The flavoprotein component catalyzes the electron flow from NADPH -&gt; FAD -&gt; FMN to the hemoprotein component. The polypeptide is Sulfite reductase [NADPH] flavoprotein alpha-component (Shigella flexneri serotype 5b (strain 8401)).